An 807-amino-acid chain; its full sequence is uncharacterized protein (807 aa).

Residues 281 to 566 enclose the Reverse transcriptase domain; that stretch reads IIQSLKSEEF…DKILFLGTNI (286 aa).

Its subcellular location is the mitochondrion. This is an uncharacterized protein from Schizosaccharomyces pombe (strain 972 / ATCC 24843) (Fission yeast).